The chain runs to 677 residues: MGSGYQLLQLPRERFRKTSFLVWVIILFQRAISMPLGIVTNSTLKATEIDQLVCRDKLSSTSQLKSVGLNLEGNGIATDVPSATKRWGFRSGVPPKVVSYEAGEWAENCYNLEIKKSDGSECLPLPPDGVRGFPRCRYVHKVQGTGPCPGDLAFHKNGAFFLYDRLASTVIYRGTTFTEGVVAFLILSEPKKHFWKATPAHEPVNTTDDSTSYYMTLTLSYEMSNFGGKESNTLFKVDNHTYVQLDRPHTPQFLVQLNETLRRNNRLSNSTGRLTWTLDPKIEPDVGEWAFWETKKNFSQQLHGENLHFQILSTHTNNSSDQSPAGTVQGKISYHPPTNNSELVPTDSPPVVSVLTAGRTEEMSTQGLTNGETITGFTANPMTTTIAPSPTMTSEVDNNVPSEQPNNTASIEDSPPSASNETIDHSEMNPIQGSNNSAQSPQTKTTPAPTASPMTQDPQETANSSKLGTSPGSAAEPSQPGFTINTVSKVADSLSPTRKQKRSVRQNTANKCNPDLHYWTAVDEGAAVGLAWIPYFGPAAEGIYIEGVMHNQNGLICGLRQLANETTQALQLFLRATTELRTYSLLNRKAIDFLLQRWGGTCRILGPSCCIEPHDWTKNITDEINQIKHDFIDNPLPDHGDDLNLWTGWRQWIPAGIGIIGVIIAIIALLCICKILC.

The N-terminal stretch at 1 to 33 is a signal peptide; that stretch reads MGSGYQLLQLPRERFRKTSFLVWVIILFQRAIS. Residues 34–651 are Extracellular-facing; that stretch reads MPLGIVTNST…DLNLWTGWRQ (618 aa). Asparagine 41 is a glycosylation site (N-linked (GlcNAc...) asparagine; by host). 5 disulfides stabilise this stretch: cysteine 54-cysteine 610, cysteine 109-cysteine 136, cysteine 122-cysteine 148, cysteine 512-cysteine 557, and cysteine 602-cysteine 609. A receptor-binding region spans residues 55-202; sequence RDKLSSTSQL…HFWKATPAHE (148 aa). Asparagine 205, asparagine 239, asparagine 258, asparagine 269, asparagine 297, asparagine 317, asparagine 318, asparagine 339, asparagine 406, asparagine 420, asparagine 435, and asparagine 463 each carry an N-linked (GlcNAc...) asparagine; by host glycan. Residues 306–486 are mucin-like region; sequence NLHFQILSTH…PSQPGFTINT (181 aa). Over residues 315–326 the composition is skewed to polar residues; it reads HTNNSSDQSPAG. Disordered regions lie at residues 315–349, 370–482, and 489–508; these read HTNN…TDSP, NGET…QPGF, and KVAD…RQNT. Composition is skewed to polar residues over residues 370–421 and 429–472; these read NGET…ASNE and NPIQ…TSPG. The segment at 525 to 540 is fusion peptide; the sequence is GAAVGLAWIPYFGPAA. Residues 555-596 adopt a coiled-coil conformation; that stretch reads LICGLRQLANETTQALQLFLRATTELRTYSLLNRKAIDFLLQ. Asparagine 564 is a glycosylation site (N-linked (GlcNAc...) asparagine; by host). A coiled-coil region spans residues 616-635; the sequence is WTKNITDEINQIKHDFIDNP. An N-linked (GlcNAc...) asparagine; by host glycan is attached at asparagine 619. A helical membrane pass occupies residues 652–672; the sequence is WIPAGIGIIGVIIAIIALLCI. Residues cysteine 671 and cysteine 673 are each lipidated (S-palmitoyl cysteine; by host). Residues 673–677 are Cytoplasmic-facing; that stretch reads CKILC.

This sequence belongs to the filoviruses glycoprotein family. In terms of assembly, homotrimer; each monomer consists of a GP1 and a GP2 subunit linked by disulfide bonds. The resulting peplomers (GP1,2) protrude from the virus surface as spikes. Interacts with host integrin alpha-V/ITGAV. Interacts with host CLEC10A. Binds also to host CD209 and CLEC4M/DC-SIGN(R). Interacts with host FOLR1. Interacts with BST2; this interaction inhibits the antiviral effect of BST2 and this allows viral release from infected cells. Interacts with host FCN1; this interaction enhances viral entry. Interacts with host TLR4; this interaction induces cell death in T-lymphocytes or proinflammatory cytokines and SOCS1 production in monocytes. Interacts with host entry receptor NPC1. As to quaternary structure, GP1 and GP2delta are part of GP1,2delta soluble complexes released by ectodomain shedding. In terms of processing, the signal peptide region modulates GP's high mannose glycosylation, thereby determining the efficiency of the interactions with DC-SIGN(R). Post-translationally, N-glycosylated. O-glycosylated in the mucin-like region. In terms of processing, palmitoylation of GP2 is not required for its function. Post-translationally, specific enzymatic cleavages in vivo yield mature proteins. The precursor is processed into GP1 and GP2 by host cell furin in the trans Golgi, and maybe by other host proteases, to yield the mature GP1 and GP2 proteins. The cleavage site corresponds to the furin optimal cleavage sequence [KR]-X-[KR]-R. This cleavage does not seem to be required for function. After the internalization of the virus into cell endosomes, GP1 C-terminus is removed by the endosomal proteases cathepsin B, cathepsin L, or both, leaving a 19-kDa N-terminal fragment which is further digested by cathepsin B. Proteolytic processing of GP1,2 by host ADAM17 can remove the transmembrane anchor of GP2 and leads to shedding of complexes consisting in GP1 and truncated GP2 (GP1,2delta).

It localises to the virion membrane. Its subcellular location is the host cell membrane. The protein localises to the secreted. Trimeric GP1,2 complexes form the virion surface spikes and mediate the viral entry processes, with GP1 acting as the receptor-binding subunit and GP2 as the membrane fusion subunit. At later times of infection, down-regulates the expression of various host cell surface molecules that are essential for immune surveillance and cell adhesion. Down-modulates several integrins including ITGA1, ITGA2, ITGA3, ITGA4, ITGA5, ITGA6, ITGAV and ITGB1. This decrease in cell adhesion molecules may lead to cell detachment, contributing to the disruption of blood vessel integrity and hemorrhages developed during infection (cytotoxicity). Interacts with host TLR4 and thereby stimulates the differentiation and activation of monocytes leading to bystander death of T-lymphocytes. Down-regulates as well the function of host natural killer cells. Counteracts the antiviral effect of host BST2/tetherin that restricts release of progeny virions from infected cells. However, cooperates with VP40 and host BST2 to activate canonical NF-kappa-B pathway in a manner dependent on neddylation. Its function is as follows. Functions as a decoy for anti-GP1,2 antibodies thereby contributing to viral immune evasion. Interacts and activates host macrophages and dendritic cells inducing up-regulation of cytokine transcription. This effect is mediated throught activation of host TLR4. Functionally, responsible for binding to the receptor(s) on target cells. Interacts with CD209/DC-SIGN and CLEC4M/DC-SIGNR which act as cofactors for virus entry into dendritic cells (DCs) and endothelial cells. Binding to the macrophage specific lectin CLEC10A also seems to enhance virus infectivity. Interaction with FOLR1/folate receptor alpha may be a cofactor for virus entry in some cell types, although results are contradictory. Members of the Tyro3 receptor tyrosine kinase family also seem to be cell entry factors in filovirus infection. Once attached, the virions are internalized through clathrin-dependent endocytosis and/or macropinocytosis. After internalization of the virus into the endosomes of the host cell, proteolysis of GP1 by two cysteine proteases, CTSB/cathepsin B and CTSL/cathepsin L removes the glycan cap and allows GP1 binding to the host entry receptor NPC1. NPC1-binding, Ca(2+) and acidic pH induce a conformational change of GP2, which unmasks its fusion peptide and permit membranes fusion. In terms of biological role, acts as a class I viral fusion protein. Under the current model, the protein has at least 3 conformational states: pre-fusion native state, pre-hairpin intermediate state, and post-fusion hairpin state. During viral and target cell membrane fusion, the coiled coil regions (heptad repeats) assume a trimer-of-hairpins structure, positioning the fusion peptide in close proximity to the C-terminal region of the ectodomain. The formation of this structure appears to drive apposition and subsequent fusion of viral and target cell membranes. Responsible for penetration of the virus into the cell cytoplasm by mediating the fusion of the membrane of the endocytosed virus particle with the endosomal membrane. Low pH in endosomes induces an irreversible conformational change in GP2, releasing the fusion hydrophobic peptide. The polypeptide is Envelope glycoprotein (GP) (Homo sapiens (Human)).